Consider the following 249-residue polypeptide: uncharacterized protein (249 aa).

The first 36 residues, 1 to 36 (MAKSPARRCTAKVRRVLSRSVLILCWSLLGAAPAHA), serve as a signal peptide directing secretion. Residues 227–249 (ARQPPGRWVCPSSAGGPIGWHRQ) form a disordered region.

This is an uncharacterized protein from Mycobacterium tuberculosis (strain CDC 1551 / Oshkosh).